The primary structure comprises 384 residues: MPVHWSKTGSGGVMQKEFTLGIEEEYLLVDRDSLQLAEAPEALMSTCQADFEGQVSPEFLQCQIEVGTRPHATIAAAREDLKRLRAGVSQRAAEHNLTPIAVSCHPFASWKDQHHTRKERYDALQHALGGVARRMLICGMHVHIGVEDKALRADLMPQLSYFLPHMLALSASSPFWNGEDTGLSSYRLTIFDNLPRTGLPPSFSSWAEYERTTGILVELGVIEDTTKIWWDLRPSHRFPTLETRIMDVQPRLEHALSLAAMNQALMRMLCRMKARNLRWRHYDRFLVGENRWRAQRYGVGEGLIDFGDRSLKPMTVLMDELMGMLSEDAEALGTLPEIARLRQIAEHGNSATRQRRVHAEALARGEDAGRAVVRHLIEEFHADL.

Belongs to the glutamate--cysteine ligase type 2 family. YbdK subfamily.

It catalyses the reaction L-cysteine + L-glutamate + ATP = gamma-L-glutamyl-L-cysteine + ADP + phosphate + H(+). In terms of biological role, ATP-dependent carboxylate-amine ligase which exhibits weak glutamate--cysteine ligase activity. The sequence is that of Putative glutamate--cysteine ligase 2 from Ruegeria pomeroyi (strain ATCC 700808 / DSM 15171 / DSS-3) (Silicibacter pomeroyi).